Reading from the N-terminus, the 352-residue chain is Protein SIS1 (352 aa).

The J domain maps to 4-70 (ETKLYDLLGV…REIYDQYGLE (67 aa)). Ser-275 bears the Phosphoserine mark. A disordered region spans residues 300 to 325 (VQPVQPSQTSTYPGQGMPTPKNPSQR). Over residues 301–312 (QPVQPSQTSTYP) the composition is skewed to polar residues.

As to quaternary structure, interacts with polyadenylate-binding protein PAB1.

It localises to the cytoplasm. It is found in the nucleus. Functionally, required for nuclear migration during mitosis. It is required for the normal initiation of translation. Might mediate the dissociation of a specific protein complex of the translation machinery. Essential for viability. The chain is Protein SIS1 (SIS1) from Saccharomyces cerevisiae (strain ATCC 204508 / S288c) (Baker's yeast).